Here is a 204-residue protein sequence, read N- to C-terminus: Large ribosomal subunit protein uL4 (204 aa).

Residues 49–90 are disordered; the sequence is KVKGMGEVSGTTKKPYRQKGTGSARQGSLRAPQYRTGGAVHG.

This sequence belongs to the universal ribosomal protein uL4 family. As to quaternary structure, part of the 50S ribosomal subunit.

One of the primary rRNA binding proteins, this protein initially binds near the 5'-end of the 23S rRNA. It is important during the early stages of 50S assembly. It makes multiple contacts with different domains of the 23S rRNA in the assembled 50S subunit and ribosome. In terms of biological role, forms part of the polypeptide exit tunnel. The polypeptide is Large ribosomal subunit protein uL4 (Gluconacetobacter diazotrophicus (strain ATCC 49037 / DSM 5601 / CCUG 37298 / CIP 103539 / LMG 7603 / PAl5)).